The following is a 695-amino-acid chain: Elongation factor G (695 aa).

The region spanning Glu4–Leu279 is the tr-type G domain. GTP contacts are provided by residues Ala13 to Thr20, Asp79 to His83, and Asn133 to Asp136.

This sequence belongs to the TRAFAC class translation factor GTPase superfamily. Classic translation factor GTPase family. EF-G/EF-2 subfamily.

Its subcellular location is the cytoplasm. Functionally, catalyzes the GTP-dependent ribosomal translocation step during translation elongation. During this step, the ribosome changes from the pre-translocational (PRE) to the post-translocational (POST) state as the newly formed A-site-bound peptidyl-tRNA and P-site-bound deacylated tRNA move to the P and E sites, respectively. Catalyzes the coordinated movement of the two tRNA molecules, the mRNA and conformational changes in the ribosome. The chain is Elongation factor G from Rhodopirellula baltica (strain DSM 10527 / NCIMB 13988 / SH1).